Here is a 186-residue protein sequence, read N- to C-terminus: MTASSNFTNQFLIAMPGLEDPNFFHSVTYICEHNEQGAMGIVINQPTDLTLKTVLEHMDIESDAKAAEIPVFHGGPVQTDRGFVLHSPAGAWSSSMPVSEGVQVTTSRDILEAMARHEGPKDVLVALGYAGWGAGQLEQEIADNAWLTTPADLDILFRLPPDQRWQAAAARLGVDLSLISGDAGHA.

It belongs to the UPF0301 (AlgH) family.

The sequence is that of UPF0301 protein Tgr7_2910 from Thioalkalivibrio sulfidiphilus (strain HL-EbGR7).